The sequence spans 432 residues: D-amino acid dehydrogenase (432 aa).

3–17 (VVILGSGVVGVTSAW) contacts FAD.

It belongs to the DadA oxidoreductase family. FAD is required as a cofactor.

It carries out the reaction a D-alpha-amino acid + A + H2O = a 2-oxocarboxylate + AH2 + NH4(+). It participates in amino-acid degradation; D-alanine degradation; NH(3) and pyruvate from D-alanine: step 1/1. Oxidative deamination of D-amino acids. This chain is D-amino acid dehydrogenase, found in Salmonella choleraesuis (strain SC-B67).